Here is a 494-residue protein sequence, read N- to C-terminus: Serine carboxypeptidase-like 21 (494 aa).

Positions 1 to 23 (MGRLVEAIIASILLSLCFTITKS) are cleaved as a signal peptide. Residues asparagine 37 and asparagine 69 are each glycosylated (N-linked (GlcNAc...) asparagine). Disulfide bonds link cysteine 85–cysteine 383, cysteine 247–cysteine 263, and cysteine 286–cysteine 350. Residue serine 179 is part of the active site. Residues asparagine 198 and asparagine 248 are each glycosylated (N-linked (GlcNAc...) asparagine). An N-linked (GlcNAc...) asparagine glycan is attached at asparagine 402. Aspartate 418 is a catalytic residue. N-linked (GlcNAc...) asparagine glycosylation is present at asparagine 460. Residue histidine 471 is part of the active site.

This sequence belongs to the peptidase S10 family. As to expression, expressed in flowers and siliques.

It localises to the secreted. Probable carboxypeptidase. The chain is Serine carboxypeptidase-like 21 (SCPL21) from Arabidopsis thaliana (Mouse-ear cress).